The sequence spans 324 residues: DTVLLNRISHDNAQLLAIVFNENVIGKAYTGGMCDPRYSVGVVMDHSPINRLVADTMAHEMGHNLGIHHDTGSCSCGGHSCIMSRVISHQPLQYFSNCSYIEYWDFITKLNPQCILNEPLRTDIVSPPVCGNELLEMGEECDCGSPRNCRDLCCDAATCKLHSWVECESGECCDQCRFIKAGNVCRPPRKECDVAEACTGQSAQCPTDDFKRNGQPCLNNYAYCYQGNCPIMYHQCYALFGSDATMAQDSCFQVNKKGNEYFYCRLENGINIPCAQEDVKCGRLFCHNMKYEQDCNYSDRGMVDNGTKCAEGKVCNSNRQAYQR.

Positions 1 to 119 (DTVLLNRISH…LNPQCILNEP (119 aa)) constitute a Peptidase M12B domain. Ca(2+) is bound at residue D11. 3 cysteine pairs are disulfide-bonded: C34-C114, C74-C98, and C76-C81. H59 lines the Zn(2+) pocket. The active site involves E60. Zn(2+)-binding residues include H63 and H69. Residue N97 is glycosylated (N-linked (GlcNAc...) asparagine). Residues C114, N117, V129, N132, L134, E136, E139, and D142 each coordinate Ca(2+). One can recognise a Disintegrin domain in the interval 127-213 (PPVCGNELLE…QCPTDDFKRN (87 aa)). Intrachain disulfides connect C130–C159, C141–C154, C143–C149, C153–C176, C167–C173, C172–C198, C185–C205, C192–C224, C217–C229, C236–C286, C251–C295, C264–C274, and C281–C315. A D/ECD-tripeptide motif is present at residues 191–193 (ECD). 2 N-linked (GlcNAc...) asparagine glycosylation sites follow: N296 and N305.

Belongs to the venom metalloproteinase (M12B) family. P-III subfamily. P-IIIa sub-subfamily. In terms of assembly, monomer. Requires Zn(2+) as cofactor. Post-translationally, N-glycosylated. In terms of processing, the N-terminus is blocked. As to expression, expressed by the venom gland.

It localises to the secreted. With respect to regulation, inhibited by EDTA, but not by PMSF. Pre-incubation with 2 mM DTT completely abolishes activity. Functionally, snake venom zinc metalloproteinase that acts as a potent hemorrhagic toxin. Hydrolyzes the insulin B chain at the 14-Ala-|-Leu-15 bond but not the 16-Tyr-|-Leu-17 bond. Degrades the alpha-chain of fibrin and hydrolyzes the Aalpha-chain of fibrinogen (FGA) while leaving the beta and gamma chains unaffected. Degrades type-I collagen and its gelatin. Degrades the alpha-1 chain of type-IV collagen and its gelatin but not the alpha-2 chain. Degrades plasma fibronectin, plasma vitronectin and basement membrane enactin. It inhibits collagen-induced platelet aggregation. In Bothrops leucurus (Whitetail lancehead), this protein is Zinc metalloproteinase leucurolysin-B.